Here is a 495-residue protein sequence, read N- to C-terminus: Aspartyl/glutamyl-tRNA(Asn/Gln) amidotransferase subunit B (495 aa).

Belongs to the GatB/GatE family. GatB subfamily. As to quaternary structure, heterotrimer of A, B and C subunits.

It carries out the reaction L-glutamyl-tRNA(Gln) + L-glutamine + ATP + H2O = L-glutaminyl-tRNA(Gln) + L-glutamate + ADP + phosphate + H(+). The catalysed reaction is L-aspartyl-tRNA(Asn) + L-glutamine + ATP + H2O = L-asparaginyl-tRNA(Asn) + L-glutamate + ADP + phosphate + 2 H(+). Functionally, allows the formation of correctly charged Asn-tRNA(Asn) or Gln-tRNA(Gln) through the transamidation of misacylated Asp-tRNA(Asn) or Glu-tRNA(Gln) in organisms which lack either or both of asparaginyl-tRNA or glutaminyl-tRNA synthetases. The reaction takes place in the presence of glutamine and ATP through an activated phospho-Asp-tRNA(Asn) or phospho-Glu-tRNA(Gln). The polypeptide is Aspartyl/glutamyl-tRNA(Asn/Gln) amidotransferase subunit B (Prochlorococcus marinus (strain MIT 9313)).